The primary structure comprises 189 residues: Crossover junction endodeoxyribonuclease RuvC (189 aa).

Active-site residues include aspartate 7, glutamate 68, and aspartate 141. Residues aspartate 7, glutamate 68, and aspartate 141 each coordinate Mg(2+).

It belongs to the RuvC family. In terms of assembly, homodimer which binds Holliday junction (HJ) DNA. The HJ becomes 2-fold symmetrical on binding to RuvC with unstacked arms; it has a different conformation from HJ DNA in complex with RuvA. In the full resolvosome a probable DNA-RuvA(4)-RuvB(12)-RuvC(2) complex forms which resolves the HJ. Mg(2+) is required as a cofactor.

It localises to the cytoplasm. The catalysed reaction is Endonucleolytic cleavage at a junction such as a reciprocal single-stranded crossover between two homologous DNA duplexes (Holliday junction).. Functionally, the RuvA-RuvB-RuvC complex processes Holliday junction (HJ) DNA during genetic recombination and DNA repair. Endonuclease that resolves HJ intermediates. Cleaves cruciform DNA by making single-stranded nicks across the HJ at symmetrical positions within the homologous arms, yielding a 5'-phosphate and a 3'-hydroxyl group; requires a central core of homology in the junction. The consensus cleavage sequence is 5'-(A/T)TT(C/G)-3'. Cleavage occurs on the 3'-side of the TT dinucleotide at the point of strand exchange. HJ branch migration catalyzed by RuvA-RuvB allows RuvC to scan DNA until it finds its consensus sequence, where it cleaves and resolves the cruciform DNA. This Chlorobium phaeovibrioides (strain DSM 265 / 1930) (Prosthecochloris vibrioformis (strain DSM 265)) protein is Crossover junction endodeoxyribonuclease RuvC.